Reading from the N-terminus, the 314-residue chain is Methionyl-tRNA formyltransferase (314 aa).

Residue 111–114 (SLLP) coordinates (6S)-5,6,7,8-tetrahydrofolate.

It belongs to the Fmt family.

The enzyme catalyses L-methionyl-tRNA(fMet) + (6R)-10-formyltetrahydrofolate = N-formyl-L-methionyl-tRNA(fMet) + (6S)-5,6,7,8-tetrahydrofolate + H(+). Its function is as follows. Attaches a formyl group to the free amino group of methionyl-tRNA(fMet). The formyl group appears to play a dual role in the initiator identity of N-formylmethionyl-tRNA by promoting its recognition by IF2 and preventing the misappropriation of this tRNA by the elongation apparatus. The protein is Methionyl-tRNA formyltransferase of Nitrobacter winogradskyi (strain ATCC 25391 / DSM 10237 / CIP 104748 / NCIMB 11846 / Nb-255).